The following is a 453-amino-acid chain: Homogentisate 1,2-dioxygenase (453 aa).

The Proton acceptor role is filled by His306. Residues His349 and Glu355 each contribute to the Fe cation site. Homogentisate-binding residues include Tyr364 and His385. His385 provides a ligand contact to Fe cation.

Belongs to the homogentisate dioxygenase family. In terms of assembly, hexamer; dimer of trimers. Fe cation is required as a cofactor.

It catalyses the reaction homogentisate + O2 = 4-maleylacetoacetate + H(+). It functions in the pathway amino-acid degradation; L-phenylalanine degradation; acetoacetate and fumarate from L-phenylalanine: step 4/6. Functionally, involved in the catabolism of homogentisate (2,5-dihydroxyphenylacetate or 2,5-OH-PhAc), a central intermediate in the degradation of phenylalanine and tyrosine. Catalyzes the oxidative ring cleavage of the aromatic ring of homogentisate to yield maleylacetoacetate. The sequence is that of Homogentisate 1,2-dioxygenase from Rhizobium etli (strain CIAT 652).